The chain runs to 111 residues: Anti-adapter protein IraM (111 aa).

This sequence belongs to the IraM/RssC family.

The protein localises to the cytoplasm. Involved in the stabilization of the sigma stress factor RpoS. This is Anti-adapter protein IraM from Cronobacter sakazakii (strain ATCC BAA-894) (Enterobacter sakazakii).